The sequence spans 350 residues: Glycerol-1-phosphate dehydrogenase [NAD(P)+] (350 aa).

NAD(+)-binding positions include 94–98 and 116–119; these read GKPID and TVAS. Asp121 is a binding site for substrate. Ser125 is an NAD(+) binding site. Asp168 is a substrate binding site. Asp168 and His248 together coordinate Zn(2+). His252 contributes to the substrate binding site. His264 contributes to the Zn(2+) binding site.

This sequence belongs to the glycerol-1-phosphate dehydrogenase family. Zn(2+) serves as cofactor.

The protein localises to the cytoplasm. It catalyses the reaction sn-glycerol 1-phosphate + NAD(+) = dihydroxyacetone phosphate + NADH + H(+). The enzyme catalyses sn-glycerol 1-phosphate + NADP(+) = dihydroxyacetone phosphate + NADPH + H(+). The protein operates within membrane lipid metabolism; glycerophospholipid metabolism. In terms of biological role, catalyzes the NAD(P)H-dependent reduction of dihydroxyacetonephosphate (DHAP or glycerone phosphate) to glycerol 1-phosphate (G1P). The G1P thus generated is used as the glycerophosphate backbone of phospholipids in the cellular membranes of Archaea. This chain is Glycerol-1-phosphate dehydrogenase [NAD(P)+], found in Halorubrum lacusprofundi (strain ATCC 49239 / DSM 5036 / JCM 8891 / ACAM 34).